The sequence spans 206 residues: Uridine kinase (206 aa).

Residue 11–18 participates in ATP binding; that stretch reads GGTGSGKS.

The protein belongs to the uridine kinase family.

It is found in the cytoplasm. The catalysed reaction is uridine + ATP = UMP + ADP + H(+). It catalyses the reaction cytidine + ATP = CMP + ADP + H(+). The protein operates within pyrimidine metabolism; CTP biosynthesis via salvage pathway; CTP from cytidine: step 1/3. It functions in the pathway pyrimidine metabolism; UMP biosynthesis via salvage pathway; UMP from uridine: step 1/1. This Clostridium botulinum (strain Okra / Type B1) protein is Uridine kinase.